A 602-amino-acid chain; its full sequence is Elongation factor 4 (602 aa).

A tr-type G domain is found at 6–188 (RNVRNFSIIA…RITEVVPEPA (183 aa)). Residues 18-23 (DHGKST) and 135-138 (NKID) each bind GTP.

This sequence belongs to the TRAFAC class translation factor GTPase superfamily. Classic translation factor GTPase family. LepA subfamily.

It is found in the cell membrane. The catalysed reaction is GTP + H2O = GDP + phosphate + H(+). Required for accurate and efficient protein synthesis under certain stress conditions. May act as a fidelity factor of the translation reaction, by catalyzing a one-codon backward translocation of tRNAs on improperly translocated ribosomes. Back-translocation proceeds from a post-translocation (POST) complex to a pre-translocation (PRE) complex, thus giving elongation factor G a second chance to translocate the tRNAs correctly. Binds to ribosomes in a GTP-dependent manner. The chain is Elongation factor 4 from Oceanobacillus iheyensis (strain DSM 14371 / CIP 107618 / JCM 11309 / KCTC 3954 / HTE831).